A 171-amino-acid polypeptide reads, in one-letter code: Small ribosomal subunit protein uS5 (171 aa).

Positions 14 to 77 constitute an S5 DRBM domain; that stretch reads LKEKLVMVNR…EKAKKKLLKI (64 aa).

The protein belongs to the universal ribosomal protein uS5 family. As to quaternary structure, part of the 30S ribosomal subunit. Contacts proteins S4 and S8.

With S4 and S12 plays an important role in translational accuracy. Functionally, located at the back of the 30S subunit body where it stabilizes the conformation of the head with respect to the body. The sequence is that of Small ribosomal subunit protein uS5 from Karelsulcia muelleri (strain GWSS) (Sulcia muelleri).